The sequence spans 405 residues: Glucan 1,3-beta-glucosidase A (405 aa).

The signal sequence occupies residues 1 to 14 (MLPLLLCIVPYCWS). E199 serves as the catalytic Proton donor. Disulfide bonds link C280–C405 and C306–C332. The active-site Nucleophile is E298.

Belongs to the glycosyl hydrolase 5 (cellulase A) family. As to quaternary structure, monomer. It depends on Mn(2+) as a cofactor.

It localises to the secreted. The catalysed reaction is Successive hydrolysis of beta-D-glucose units from the non-reducing ends of (1-&gt;3)-beta-D-glucans, releasing alpha-glucose.. In terms of biological role, beta-glucanases participate in the metabolism of beta-glucan, the main structural component of the cell wall. It could also function biosynthetically as a transglycosylase. In Aspergillus oryzae (strain ATCC 42149 / RIB 40) (Yellow koji mold), this protein is Glucan 1,3-beta-glucosidase A (exgA).